We begin with the raw amino-acid sequence, 202 residues long: Casparian strip membrane protein 4 (202 aa).

The Cytoplasmic segment spans residues 1 to 40 (MKSDSIAVDVPAESSSAIKGKAPLLGLARDHTGSGGYKRG). A helical membrane pass occupies residues 41–61 (LSIFDFLLRLAAIVAALAAAA). At 62–90 (TMGTSDETLPFFTQFLQFEASYDDLPTFQ) the chain is on the extracellular side. A helical membrane pass occupies residues 91–111 (FFVVAIAIVTGYLVLSLPFSV). Topologically, residues 112-130 (VTIVRPLAVAPRLLLLVLD) are cytoplasmic. Residues 131–151 (TAALALDTAAASAAAAIVYLA) form a helical membrane-spanning segment. The Extracellular segment spans residues 152-176 (HNGNTNTNWLPICQQFGDFCQKTSG). A helical transmembrane segment spans residues 177 to 197 (AVVSAFASVTFLAILVVISGV). Residues 198–202 (SLKRP) are Cytoplasmic-facing.

This sequence belongs to the Casparian strip membrane proteins (CASP) family. As to quaternary structure, homodimer and heterodimers.

It localises to the cell membrane. Regulates membrane-cell wall junctions and localized cell wall deposition. Required for establishment of the Casparian strip membrane domain (CSD) and the subsequent formation of Casparian strips, a cell wall modification of the root endodermis that determines an apoplastic barrier between the intraorganismal apoplasm and the extraorganismal apoplasm and prevents lateral diffusion. The polypeptide is Casparian strip membrane protein 4 (Arabidopsis lyrata subsp. lyrata (Lyre-leaved rock-cress)).